The following is a 205-amino-acid chain: Protein N-terminal glutamine amidohydrolase (205 aa).

Catalysis depends on residues cysteine 20, histidine 74, and aspartate 90.

It belongs to the NTAQ1 family. In terms of assembly, monomer.

The enzyme catalyses N-terminal L-glutaminyl-[protein] + H2O = N-terminal L-glutamyl-[protein] + NH4(+). Its function is as follows. Mediates the side-chain deamidation of N-terminal glutamine residues to glutamate, an important step in N-end rule pathway of protein degradation. Conversion of the resulting N-terminal glutamine to glutamate renders the protein susceptible to arginylation, polyubiquitination and degradation as specified by the N-end rule. Does not act on substrates with internal or C-terminal glutamine and does not act on non-glutamine residues in any position. In Drosophila grimshawi (Hawaiian fruit fly), this protein is Protein N-terminal glutamine amidohydrolase (tun).